The following is a 428-amino-acid chain: Serine--tRNA ligase (428 aa).

231–233 (TAE) serves as a coordination point for L-serine. 262 to 264 (RSE) lines the ATP pocket. Glu285 contacts L-serine. 349 to 352 (EISS) is an ATP binding site. An L-serine-binding site is contributed by Ser385.

The protein belongs to the class-II aminoacyl-tRNA synthetase family. Type-1 seryl-tRNA synthetase subfamily. Homodimer. The tRNA molecule binds across the dimer.

The protein localises to the cytoplasm. The enzyme catalyses tRNA(Ser) + L-serine + ATP = L-seryl-tRNA(Ser) + AMP + diphosphate + H(+). The catalysed reaction is tRNA(Sec) + L-serine + ATP = L-seryl-tRNA(Sec) + AMP + diphosphate + H(+). It functions in the pathway aminoacyl-tRNA biosynthesis; selenocysteinyl-tRNA(Sec) biosynthesis; L-seryl-tRNA(Sec) from L-serine and tRNA(Sec): step 1/1. Catalyzes the attachment of serine to tRNA(Ser). Is also able to aminoacylate tRNA(Sec) with serine, to form the misacylated tRNA L-seryl-tRNA(Sec), which will be further converted into selenocysteinyl-tRNA(Sec). The sequence is that of Serine--tRNA ligase from Staphylococcus epidermidis (strain ATCC 35984 / DSM 28319 / BCRC 17069 / CCUG 31568 / BM 3577 / RP62A).